The chain runs to 456 residues: Enolase (456 aa).

Position 177 (glutamine 177) interacts with (2R)-2-phosphoglycerate. Glutamate 219 functions as the Proton donor in the catalytic mechanism. Aspartate 256, glutamate 310, and aspartate 337 together coordinate Mg(2+). 4 residues coordinate (2R)-2-phosphoglycerate: lysine 362, arginine 391, serine 392, and lysine 413. Lysine 362 (proton acceptor) is an active-site residue.

It belongs to the enolase family. As to quaternary structure, homodimer. The cofactor is Mg(2+).

It is found in the cytoplasm. The protein localises to the secreted. Its subcellular location is the cell surface. It carries out the reaction (2R)-2-phosphoglycerate = phosphoenolpyruvate + H2O. The protein operates within carbohydrate degradation; glycolysis; pyruvate from D-glyceraldehyde 3-phosphate: step 4/5. In terms of biological role, catalyzes the reversible conversion of 2-phosphoglycerate (2-PG) into phosphoenolpyruvate (PEP). It is essential for the degradation of carbohydrates via glycolysis. Functionally, 'Moonlights' as a plasminogen receptor. Binds plasminogen, but no fibronectin binding was observed. Plasminogen binding increases bacterial adherence to host cells; plasmin activity leads to degradation of host extracellular matrix proteins, facilitating bacterial dissemination and disease spread. This Mycoplasma pneumoniae (strain ATCC 29342 / M129 / Subtype 1) (Mycoplasmoides pneumoniae) protein is Enolase.